The primary structure comprises 73 residues: uncharacterized protein (73 aa).

2 helical membrane passes run 10 to 30 (ILLAILFFALVVSLVGLYVSA) and 42 to 62 (YSTVYKVLMNAAMLLIVIYLI).

Its subcellular location is the cell membrane. This is an uncharacterized protein from Archaeoglobus fulgidus (strain ATCC 49558 / DSM 4304 / JCM 9628 / NBRC 100126 / VC-16).